The chain runs to 266 residues: Cytosolic Fe-S cluster assembly factor Nubp2 homolog (266 aa).

ATP is bound at residue 14–21 (GKGGVGKS). 2 residues coordinate [4Fe-4S] cluster: Cys-188 and Cys-191.

The protein belongs to the Mrp/NBP35 ATP-binding proteins family. Nubp2/CFD1 subfamily. As to quaternary structure, heterotetramer of 2 Nubp1 and 2 Nubp2 chains. [4Fe-4S] cluster is required as a cofactor.

It localises to the cytoplasm. Component of the cytosolic iron-sulfur (Fe/S) protein assembly (CIA) machinery. Required for maturation of extramitochondrial Fe-S proteins. The Nubp1-Nubp2 heterotetramer forms a Fe-S scaffold complex, mediating the de novo assembly of an Fe-S cluster and its transfer to target apoproteins. This chain is Cytosolic Fe-S cluster assembly factor Nubp2 homolog, found in Drosophila virilis (Fruit fly).